The chain runs to 544 residues: Bacillolysin (544 aa).

Positions 1 to 25 (MNKRAMLGAIGLAFGLMAWPFGASA) are cleaved as a signal peptide. The propeptide at 26-225 (KGKSMVWNEQ…DEAKPGGAQP (200 aa)) is activation peptide. Residues Asp-285, Asp-287, Gln-289, and Asp-366 each contribute to the Ca(2+) site. His-370 is a binding site for Zn(2+). The active site involves Glu-371. Zn(2+)-binding residues include His-374 and Glu-394. The Ca(2+) site is built by Glu-405, Asn-411, Asp-413, Glu-415, Glu-418, Tyr-421, Thr-422, Val-425, and Asp-428. His-459 functions as the Proton donor in the catalytic mechanism.

Belongs to the peptidase M4 family. It depends on Ca(2+) as a cofactor. The cofactor is Zn(2+).

It is found in the secreted. It catalyses the reaction Similar, but not identical, to that of thermolysin.. Its function is as follows. Extracellular zinc metalloprotease. In Bacillus caldolyticus, this protein is Bacillolysin (npr).